A 245-amino-acid chain; its full sequence is 1-(5-phosphoribosyl)-5-[(5-phosphoribosylamino)methylideneamino] imidazole-4-carboxamide isomerase (245 aa).

Catalysis depends on aspartate 7, which acts as the Proton acceptor. The Proton donor role is filled by aspartate 129.

This sequence belongs to the HisA/HisF family.

It is found in the cytoplasm. The catalysed reaction is 1-(5-phospho-beta-D-ribosyl)-5-[(5-phospho-beta-D-ribosylamino)methylideneamino]imidazole-4-carboxamide = 5-[(5-phospho-1-deoxy-D-ribulos-1-ylimino)methylamino]-1-(5-phospho-beta-D-ribosyl)imidazole-4-carboxamide. It participates in amino-acid biosynthesis; L-histidine biosynthesis; L-histidine from 5-phospho-alpha-D-ribose 1-diphosphate: step 4/9. This Salmonella dublin (strain CT_02021853) protein is 1-(5-phosphoribosyl)-5-[(5-phosphoribosylamino)methylideneamino] imidazole-4-carboxamide isomerase.